The primary structure comprises 80 residues: Omega-conotoxin-like 1 (80 aa).

The signal sequence occupies residues Met1 to Thr22. A propeptide spanning residues Asp23–Ser49 is cleaved from the precursor. Cystine bridges form between Cys52-Cys66, Cys59-Cys70, and Cys65-Cys79.

This sequence belongs to the conotoxin O1 superfamily. In terms of processing, peptide predicted to begin at Arg-51, but it seems more probable that it begins at Cys-52, since this position corresponds to a dibasic residue cleavage. Expressed by the venom duct.

It is found in the secreted. Functionally, omega-conotoxins act at presynaptic membranes, they bind and block voltage-gated calcium channels (Cav). This is Omega-conotoxin-like 1 from Conus capitaneus (Captain cone).